Here is a 966-residue protein sequence, read N- to C-terminus: MKEKMQRMVLSLAMVGFMVFGVASAMNNEGKALMAIKGSFSNLVNMLLDWDDVHNSDLCSWRGVFCDNVSYSVVSLNLSSLNLGGEISPAIGDLRNLQSIDLQGNKLAGQIPDEIGNCASLVYLDLSENLLYGDIPFSISKLKQLETLNLKNNQLTGPVPATLTQIPNLKRLDLAGNHLTGEISRLLYWNEVLQYLGLRGNMLTGTLSSDMCQLTGLWYFDVRGNNLTGTIPESIGNCTSFQILDISYNQITGEIPYNIGFLQVATLSLQGNRLTGRIPEVIGLMQALAVLDLSDNELVGPIPPILGNLSFTGKLYLHGNMLTGPIPSELGNMSRLSYLQLNDNKLVGTIPPELGKLEQLFELNLANNRLVGPIPSNISSCAALNQFNVHGNLLSGSIPLAFRNLGSLTYLNLSSNNFKGKIPVELGHIINLDKLDLSGNNFSGSIPLTLGDLEHLLILNLSRNHLSGQLPAEFGNLRSIQMIDVSFNLLSGVIPTELGQLQNLNSLILNNNKLHGKIPDQLTNCFTLVNLNVSFNNLSGIVPPMKNFSRFAPASFVGNPYLCGNWVGSICGPLPKSRVFSRGALICIVLGVITLLCMIFLAVYKSMQQKKILQGSSKQAEGLTKLVILHMDMAIHTFDDIMRVTENLNEKFIIGYGASSTVYKCALKSSRPIAIKRLYNQYPHNLREFETELETIGSIRHRNIVSLHGYALSPTGNLLFYDYMENGSLWDLLHGSLKKVKLDWETRLKIAVGAAQGLAYLHHDCTPRIIHRDIKSSNILLDENFEAHLSDFGIAKSIPASKTHASTYVLGTIGYIDPEYARTSRINEKSDIYSFGIVLLELLTGKKAVDNEANLHQLILSKADDNTVMEAVDPEVTVTCMDLGHIRKTFQLALLCTKRNPLERPTMLEVSRVLLSLVPSLQVAKKLPSLDHSTKKLQQENEVRNPDAEASQWFVQFREVISKSSI.

Residues 1 to 25 (MKEKMQRMVLSLAMVGFMVFGVASA) form the signal peptide. Topologically, residues 26–582 (MNNEGKALMA…PLPKSRVFSR (557 aa)) are extracellular. Residues 40–63 (FSNLVNMLLDWDDVHNSDLCSWRG) form an LRR 1 repeat. N-linked (GlcNAc...) asparagine glycosylation is found at N68 and N77. LRR repeat units follow at residues 75–94 (SLNL…IGDL), 95–118 (RNLQ…IGNC), 120–142 (SLVY…ISKL), 143–166 (KQLE…LTQI), 168–190 (NLKR…LYWN), 192–214 (VLQY…MCQL), 215–238 (TGLW…IGNC), 239–261 (TSFQ…NIGF), 262–285 (LQVA…IGLM), 286–311 (QALA…NLSF), 313–333 (GKLY…LGNM), 334–357 (SRLS…LGKL), 359–381 (QLFE…ISSC), 383–404 (ALNQ…AFRN), 405–429 (LGSL…LGHI), 431–453 (NLDK…LGDL), 454–476 (EHLL…EFGN), 478–500 (RSIQ…ELGQ), 501–525 (LQNL…LTNC), and 527–550 (TLVN…NFSR). 2 N-linked (GlcNAc...) asparagine glycosylation sites follow: N226 and N237. N308 and N332 each carry an N-linked (GlcNAc...) asparagine glycan. An N-linked (GlcNAc...) asparagine glycan is attached at N377. Residues N412, N441, and N460 are each glycosylated (N-linked (GlcNAc...) asparagine). Residues N532, N537, and N547 are each glycosylated (N-linked (GlcNAc...) asparagine). A helical transmembrane segment spans residues 583-603 (GALICIVLGVITLLCMIFLAV). Residues 604–966 (YKSMQQKKIL…FREVISKSSI (363 aa)) lie on the Cytoplasmic side of the membrane. Phosphothreonine occurs at positions 637 and 645. In terms of domain architecture, Protein kinase spans 648–921 (LNEKFIIGYG…RVLLSLVPSL (274 aa)). ATP-binding positions include 654–662 (IGYGASSTV) and K676. Y721 and Y760 each carry phosphotyrosine. D773 serves as the catalytic Proton acceptor. Y815 bears the Phosphotyrosine mark. At T823 the chain carries Phosphothreonine.

It belongs to the protein kinase superfamily. Ser/Thr protein kinase family. In terms of assembly, homodimer and heterodimer with ERECTA and TMM. Interacts with EPF1 and EPF2. Interacts with SERK1, SERK2, SERK3/BAK1 and SERK4 in a EPF1-induced manner. In terms of tissue distribution, mostly expressed in developing organs, including bud clusters, flowers, siliques and young rosettes. Also detected in mature aboveground organs, such as leaves, stems and pedicels, but barely in roots.

The protein resides in the cell membrane. The catalysed reaction is L-seryl-[protein] + ATP = O-phospho-L-seryl-[protein] + ADP + H(+). It catalyses the reaction L-threonyl-[protein] + ATP = O-phospho-L-threonyl-[protein] + ADP + H(+). Its function is as follows. Receptor kinase that regulates inflorescence architecture and organ shape as well as stomatal patterning, including density and clustering, together with ER and ERL2. Redundantly involved with ER in procambial development regulation. Forms a functional ligand-receptor pair with EPF1 (AC Q8S8I4). Forms a constitutive complex with TMM involved in the recognition of the stomatal regulatory peptides EPF1, EPF2 and EPFL9/STOMAGEN. In Arabidopsis thaliana (Mouse-ear cress), this protein is LRR receptor-like serine/threonine-protein kinase ERL1.